The primary structure comprises 156 residues: SsrA-binding protein (156 aa).

Belongs to the SmpB family.

The protein resides in the cytoplasm. Required for rescue of stalled ribosomes mediated by trans-translation. Binds to transfer-messenger RNA (tmRNA), required for stable association of tmRNA with ribosomes. tmRNA and SmpB together mimic tRNA shape, replacing the anticodon stem-loop with SmpB. tmRNA is encoded by the ssrA gene; the 2 termini fold to resemble tRNA(Ala) and it encodes a 'tag peptide', a short internal open reading frame. During trans-translation Ala-aminoacylated tmRNA acts like a tRNA, entering the A-site of stalled ribosomes, displacing the stalled mRNA. The ribosome then switches to translate the ORF on the tmRNA; the nascent peptide is terminated with the 'tag peptide' encoded by the tmRNA and targeted for degradation. The ribosome is freed to recommence translation, which seems to be the essential function of trans-translation. This Bacillus velezensis (strain DSM 23117 / BGSC 10A6 / LMG 26770 / FZB42) (Bacillus amyloliquefaciens subsp. plantarum) protein is SsrA-binding protein.